A 385-amino-acid polypeptide reads, in one-letter code: Homoserine O-succinyltransferase (385 aa).

The AB hydrolase-1 domain occupies 45-355; that stretch reads NAVLVCHALN…PHGHDAFLLD (311 aa). Serine 151 acts as the Nucleophile in catalysis. Arginine 221 is a substrate binding site. Residues aspartate 316 and histidine 349 contribute to the active site. Substrate is bound at residue aspartate 350.

The protein belongs to the AB hydrolase superfamily. MetX family. Homodimer.

The protein localises to the cytoplasm. It catalyses the reaction L-homoserine + succinyl-CoA = O-succinyl-L-homoserine + CoA. It participates in amino-acid biosynthesis; L-methionine biosynthesis via de novo pathway; O-succinyl-L-homoserine from L-homoserine: step 1/1. Transfers a succinyl group from succinyl-CoA to L-homoserine, forming succinyl-L-homoserine. The protein is Homoserine O-succinyltransferase of Janthinobacterium sp. (strain Marseille) (Minibacterium massiliensis).